Here is a 256-residue protein sequence, read N- to C-terminus: Pyridoxine 5'-phosphate synthase (256 aa).

Residue Asn-12 participates in 3-amino-2-oxopropyl phosphate binding. 14 to 15 (DH) contributes to the 1-deoxy-D-xylulose 5-phosphate binding site. Residue Arg-23 participates in 3-amino-2-oxopropyl phosphate binding. His-48 (proton acceptor) is an active-site residue. Arg-50 and His-55 together coordinate 1-deoxy-D-xylulose 5-phosphate. The active-site Proton acceptor is the Glu-75. Residue Thr-105 participates in 1-deoxy-D-xylulose 5-phosphate binding. The Proton donor role is filled by His-199. 3-amino-2-oxopropyl phosphate is bound by residues Gly-200 and 221–222 (GY).

This sequence belongs to the PNP synthase family. Homooctamer; tetramer of dimers.

The protein resides in the cytoplasm. The catalysed reaction is 3-amino-2-oxopropyl phosphate + 1-deoxy-D-xylulose 5-phosphate = pyridoxine 5'-phosphate + phosphate + 2 H2O + H(+). It participates in cofactor biosynthesis; pyridoxine 5'-phosphate biosynthesis; pyridoxine 5'-phosphate from D-erythrose 4-phosphate: step 5/5. Functionally, catalyzes the complicated ring closure reaction between the two acyclic compounds 1-deoxy-D-xylulose-5-phosphate (DXP) and 3-amino-2-oxopropyl phosphate (1-amino-acetone-3-phosphate or AAP) to form pyridoxine 5'-phosphate (PNP) and inorganic phosphate. The protein is Pyridoxine 5'-phosphate synthase of Bradyrhizobium sp. (strain ORS 278).